The sequence spans 281 residues: 4-deoxy-L-threo-5-hexosulose-uronate ketol-isomerase (281 aa).

Residues His-198, His-200, Glu-205, and His-248 each contribute to the Zn(2+) site.

The protein belongs to the KduI family. Requires Zn(2+) as cofactor.

It catalyses the reaction 5-dehydro-4-deoxy-D-glucuronate = 3-deoxy-D-glycero-2,5-hexodiulosonate. Its pathway is glycan metabolism; pectin degradation; 2-dehydro-3-deoxy-D-gluconate from pectin: step 4/5. Functionally, catalyzes the isomerization of 5-dehydro-4-deoxy-D-glucuronate to 3-deoxy-D-glycero-2,5-hexodiulosonate. This Levilactobacillus brevis (strain ATCC 367 / BCRC 12310 / CIP 105137 / JCM 1170 / LMG 11437 / NCIMB 947 / NCTC 947) (Lactobacillus brevis) protein is 4-deoxy-L-threo-5-hexosulose-uronate ketol-isomerase.